A 151-amino-acid chain; its full sequence is Melatonin receptor type 1C (151 aa).

Over 1-13 (CHSLRYDRLYSRR) the chain is Cytoplasmic. The helical transmembrane segment at 14–34 (NTCLYLLLTWMLTALATVPNF) threads the bilayer. Over 35 to 58 (LVGSLKYDPRVFSCTFTQTASSSY) the chain is Extracellular. Residues 59–79 (TVCVVLIHFLVPLGVVSFCYL) form a helical membrane-spanning segment. At 80 to 109 (RIWTLVIRVKGRVRPNPKVRAADLRNFLTM) the chain is on the cytoplasmic side. The helical transmembrane segment at 110–130 (FVVFVLFAVCWAPLNFIGLAV) threads the bilayer. Residues 131-143 (AINPAKVAPNIPE) lie on the Extracellular side of the membrane. A helical transmembrane segment spans residues 144–151 (WLFVTSYF).

It belongs to the G-protein coupled receptor 1 family.

It is found in the cell membrane. Functionally, high affinity receptor for melatonin. The activity of this receptor is mediated by pertussis toxin sensitive G proteins that inhibits adenylate cyclase activity. This chain is Melatonin receptor type 1C (mtnr1c), found in Danio rerio (Zebrafish).